The primary structure comprises 206 residues: Type III pantothenate kinase (206 aa).

ATP is bound at residue Asp5–His12. Substrate contacts are provided by residues Tyr69 and Gly73–Arg76. The active-site Proton acceptor is Asp75. Asp90 is a K(+) binding site. Residue Ser93 participates in ATP binding. Thr145 is a binding site for substrate.

This sequence belongs to the type III pantothenate kinase family. As to quaternary structure, homodimer. It depends on NH4(+) as a cofactor. K(+) is required as a cofactor.

The protein localises to the cytoplasm. The enzyme catalyses (R)-pantothenate + ATP = (R)-4'-phosphopantothenate + ADP + H(+). It functions in the pathway cofactor biosynthesis; coenzyme A biosynthesis; CoA from (R)-pantothenate: step 1/5. In terms of biological role, catalyzes the phosphorylation of pantothenate (Pan), the first step in CoA biosynthesis. The chain is Type III pantothenate kinase from Helicobacter hepaticus (strain ATCC 51449 / 3B1).